The following is a 426-amino-acid chain: Immunoglobulin mu Fc receptor (426 aa).

The signal sequence occupies residues Met1–Thr16. The 98-residue stretch at Arg24–Val121 folds into the Ig-like domain. 2 disulfides stabilise this stretch: Cys37/Cys103 and Cys49/Cys58. Residue Thr91 is modified to Phosphothreonine. Positions Lys178 to Ala212 are disordered. Residues Phe267 to Val287 traverse the membrane as a helical segment. 2 disordered regions span residues Arg306–Asp346 and Asp401–Gln426. Residues Pro415 to Gln426 show a composition bias toward pro residues.

In terms of assembly, interacts (via Ig-like domain) with IGHM (via CH4/Cmu4 domain), both secreted and membrane-bound IgM; the interaction is glycan-independent and multivalent theoretically involving up to eight binding sites for the IgM pentamer. Post-translationally, phosphorylated on both Tyr and Ser residues. In terms of processing, O-glycosylated. Sialylated. O-linked glycans regulate trafficking to the plasma membrane.

It is found in the cell membrane. Its subcellular location is the early endosome membrane. It localises to the golgi apparatus. The protein localises to the trans-Golgi network membrane. The protein resides in the lysosome membrane. Its function is as follows. High-affinity Fc receptor for immunoglobulin M (IgM), both secreted and membrane-bound IgM. Primarily regulates IgM transport and homeostasis. In lymphoid cells, enables exocytosis of membrane-bound IgM on the plasma membrane as well as endocytosis of IgM-antigen complexes toward lysosomes for degradation. In mucosal epithelium, mediates retrotranscytosis of antigen-IgM complexes across mucosal M cells toward antigen-presenting cells in mucosal lymphoid tissues. Triggers costimulatory signaling and mediates most of IgM effector functions involved in B cell development and primary immune response to infection. Likely limits tonic IgM BCR signaling to self-antigens for proper negative selection of autoreactive B cells in the bone marrow and for the maintenance of regulatory B cell pool in peripheral lymphoid organs. Mediates antibody responses to T cell-dependent and T cell-independent antigens and promotes induction of an efficient neutralizing IgG response. Engages in cross-talk with antigen-receptor signaling via the non-canonical NF-kappa-B, MAP kinases and calcium signaling pathways. The polypeptide is Immunoglobulin mu Fc receptor (Rattus norvegicus (Rat)).